A 944-amino-acid polypeptide reads, in one-letter code: Isoleucine--tRNA ligase (944 aa).

The 'HIGH' region motif lies at 58–68 (PYANGSIHIGH). Residue E563 participates in L-isoleucyl-5'-AMP binding. The 'KMSKS' region signature appears at 604 to 608 (KMSKS). K607 lines the ATP pocket. Residues C907, C910, C927, and C930 each contribute to the Zn(2+) site.

It belongs to the class-I aminoacyl-tRNA synthetase family. IleS type 1 subfamily. In terms of assembly, monomer. The cofactor is Zn(2+).

The protein resides in the cytoplasm. The catalysed reaction is tRNA(Ile) + L-isoleucine + ATP = L-isoleucyl-tRNA(Ile) + AMP + diphosphate. Functionally, catalyzes the attachment of isoleucine to tRNA(Ile). As IleRS can inadvertently accommodate and process structurally similar amino acids such as valine, to avoid such errors it has two additional distinct tRNA(Ile)-dependent editing activities. One activity is designated as 'pretransfer' editing and involves the hydrolysis of activated Val-AMP. The other activity is designated 'posttransfer' editing and involves deacylation of mischarged Val-tRNA(Ile). The polypeptide is Isoleucine--tRNA ligase (Salmonella paratyphi A (strain ATCC 9150 / SARB42)).